The chain runs to 263 residues: MLTITAIKAFNDNYIWVLQQQPHTQVYVVDPGDASVVIDYLEANQLTLAGILLTHHHNDHTGGVAELQAYSQNRLTVYGPDNEKIEGITHPLNATAQPRFILDYMSGELQVLDVPGHTAGHIAYVIADALFCGDTLFSAGCGRLFEGTPAQMLNSLQQLAQLPADTRVYCAHEYTLSNLKFALAVNPNNRALQDYNERAVALRRQDKATIPSTIALERAINPFLRASDTEIVDSIKQHFSDLNHANLDELGGFTLLRQWKDNF.

Zn(2+) is bound by residues H55, H57, D59, H60, H117, D134, and H172.

It belongs to the metallo-beta-lactamase superfamily. Glyoxalase II family. As to quaternary structure, monomer. Zn(2+) is required as a cofactor.

It catalyses the reaction an S-(2-hydroxyacyl)glutathione + H2O = a 2-hydroxy carboxylate + glutathione + H(+). The protein operates within secondary metabolite metabolism; methylglyoxal degradation; (R)-lactate from methylglyoxal: step 2/2. Functionally, thiolesterase that catalyzes the hydrolysis of S-D-lactoyl-glutathione to form glutathione and D-lactic acid. This Shewanella baltica (strain OS155 / ATCC BAA-1091) protein is Hydroxyacylglutathione hydrolase.